Here is a 93-residue protein sequence, read N- to C-terminus: MTPNCAKELVTLSAAHKSFKDYKPQNNYDSIVYSDFKEVEELYGEAQSRRMEHLAKQALLDISTHEPVENAVTLTRITIGALKGDETAKAQLR.

This is an uncharacterized protein from Pasteurella multocida (strain Pm70).